Reading from the N-terminus, the 292-residue chain is D-galactarolactone isomerase (292 aa).

This sequence belongs to the metallo-dependent hydrolases superfamily. The cofactor is Does not require a metal cofactor..

The enzyme catalyses D-galactaro-1,5-lactone = D-galactaro-1,4-lactone. The protein operates within carbohydrate acid metabolism; D-galacturonate degradation via prokaryotic oxidative pathway. Catalyzes the isomerization of D-galactaro-1,5-lactone to D-galactaro-1,4-lactone. This is a step in the oxidative degradation pathway of D-galacturonate, which allows A.tumefaciens to utilize D-galacturonate as a sole carbon source. In Agrobacterium fabrum (strain C58 / ATCC 33970) (Agrobacterium tumefaciens (strain C58)), this protein is D-galactarolactone isomerase.